The following is a 1035-amino-acid chain: MGGPAAPRGAGRLRALLLALVVAGIPAGAYNLDPQRPVHFQGPADSFFGYAVLEHFHDNTRWVLVGAPKADSKYSPSVKSPGAVFKCRVHTNPDRRCTELDMARGKNRGTSCGKTCREDRDDEWMGVSLARQPKADGRVLACAHRWKNIYYEADHILPHGFCYIIPSNLQAKGRTLIPCYEEYKKKYGEEHGSCQAGIAGFFTEELVVMGAPGSFYWAGTIKVLNLTDNTYLKLNDEVIMNRRYTYLGYAVTAGHFSHPSTIDVVGGAPQDKGIGKVYIFRADRRSGTLIKIFQASGKKMGSYFGSSLCAVDLNGDGLSDLLVGAPMFSEIRDEGQVTVYINRGNGALEEQLALTGDGAYNAHFGESIASLDDLDNDGFPDVAIGAPKEDDFAGAVYIYHGDAGGIVPQYSMKLSGQKINPVLRMFGQSISGGIDMDGNGYPDVTVGAFMSDSVVLLRARPVITVDVSIFLPGSINITAPQCHDGQQPVNCLNVTTCFSFHGKHVPGEIGLNYVLMADVAKKEKGQMPRVYFVLLGETMGQVTEKLQLTYMEETCRHYVAHVKRRVQDVISPIVFEAAYSLSEHVTGEEERELPPLTPVLRWKKGQKIAQKNQTVFERNCRSEDCAADLQLQGKLLLSSMDEKTLYLALGAVKNISLNISISNLGDDAYDANVSFNVSRELFFINMWQKEEMGISCELLESDFLKCSVGFPFMRSKSKYEFSVIFDTSHLSGEEEVLSFIVTAQSGNTERSESLHDNTLVLMVPLMHEVDTSITGIMSPTSFVYGESVDAANFIQLDDLECHFQPINITLQVYNTGPSTLPGSSVSISFPNRLSSGGAEMFHVQEMVVGQEKGNCSFQKNPTPCIIPQEQENIFHTIFAFFTKSGRKVLDCEKPGISCLTAHCNFSALAKEESRTIDIYMLLNTEILKKDSSSVIQFMSRAKVKVDPALRVVEIAHGNPEEVTVVFEALHNLEPRGYVVGWIIAISLLVGILIFLLLAVLLWKMGFFRRRYKEIIEAEKNRKENEDSWDWVQKNQ.

An N-terminal signal peptide occupies residues 1-29; sequence MGGPAAPRGAGRLRALLLALVVAGIPAGA. Over 30-981 the chain is Extracellular; sequence YNLDPQRPVH…LEPRGYVVGW (952 aa). FG-GAP repeat units lie at residues 35 to 96, 111 to 174, 182 to 232, 233 to 289, 290 to 349, 351 to 408, and 411 to 474; these read QRPV…PDRR, SCGK…AKGR, EYKK…NTYL, KLND…SGTL, IKIF…GALE, QLAL…GIVP, and SMKL…LPGS. Disulfide bonds link Cys-87/Cys-97, Cys-142/Cys-162, and Cys-179/Cys-194. A glycan (N-linked (GlcNAc...) asparagine) is linked at Asn-225. Ca(2+) contacts are provided by Asp-312, Asn-314, Asp-316, Asp-320, Asp-373, Asp-375, Asp-377, Asp-381, Asp-435, Asp-437, Asn-439, and Asp-443. Asn-476 is a glycosylation site (N-linked (GlcNAc...) asparagine). Cys-482 and Cys-491 are joined by a disulfide. Residue Asn-493 is glycosylated (N-linked (GlcNAc...) asparagine). Cys-497 and Cys-555 are joined by a disulfide. An N-linked (GlcNAc...) asparagine glycan is attached at Asn-612. Cysteines 620 and 625 form a disulfide. Residues Asn-654, Asn-658, Asn-672, and Asn-676 are each glycosylated (N-linked (GlcNAc...) asparagine). A disulfide bridge links Cys-696 with Cys-706. N-linked (GlcNAc...) asparagine glycans are attached at residues Asn-807 and Asn-854. Intrachain disulfides connect Cys-855-Cys-891 and Cys-898-Cys-903. Asn-904 is a glycosylation site (N-linked (GlcNAc...) asparagine). The chain crosses the membrane as a helical span at residues 982–1002; the sequence is IIAISLLVGILIFLLLAVLLW. Residues 1003–1035 lie on the Cytoplasmic side of the membrane; that stretch reads KMGFFRRRYKEIIEAEKNRKENEDSWDWVQKNQ. The short motif at 1005 to 1009 is the GFFKR motif element; that stretch reads GFFRR.

It belongs to the integrin alpha chain family. Heterodimer of an alpha and a beta subunit. Alpha-9 (ITGA9) associates with beta-1 (ITGB1). Integrin ITGA9:ITGB1 interacts with FBLN5 (via N-terminus). Integrin ITGA9:ITGB1 interacts with SPP1/OPN (via N-terminus). Integrin ITGA9:ITGB1 interacts with TNC/TNFN3 (via the 3rd Fibronectin type-III domain). Integrin ITGA9:ITGB1 interacts with SVEP1/polydom (via Sushi domain 21); thereby inhibits Ca(2+) intracellular signaling and as a result represses vasocontraction. As to expression, expressed in vascular smooth muscle cells (at protein level). Expressed in the airway epithelium (at protein level).

It is found in the membrane. Its function is as follows. Integrin alpha-9/beta-1 (ITGA9:ITGB1) is a receptor for VCAM1, cytotactin and osteopontin. It recognizes the sequence A-E-I-D-G-I-E-L in cytotactin. ITGA9:ITGB1 may play a crucial role in SVEP1/polydom-mediated myoblast cell adhesion. Integrin ITGA9:ITGB1 represses PRKCA-mediated L-type voltage-gated channel Ca(2+) influx and ROCK-mediated calcium sensitivity in vascular smooth muscle cells via its interaction with SVEP1, thereby inhibiting vasocontraction. The protein is Integrin alpha-9 (ITGA9) of Homo sapiens (Human).